The following is a 646-amino-acid chain: Type I inositol polyphosphate 5-phosphatase 2 (646 aa).

The span at 59–74 shows a compositional bias: basic and acidic residues; sequence TDEDSHNGRRGSEADH. Disordered stretches follow at residues 59–99, 185–207, and 329–369; these read TDED…GKSE, ESVY…SAPS, and IDNR…IRNS. Positions 188–207 are enriched in polar residues; that stretch reads YDQSPSCNNNALHRSHSAPS. Residues 341 to 350 are compositionally biased toward basic and acidic residues; that stretch reads EAAKIMHDDS. 2 catalytic regions span residues 495-510 and 575-590; these read DQVF…LNMS and KKRA…WLGK.

It belongs to the inositol polyphosphate 5-phosphatase family. As to expression, expressed ubiquitously.

It catalyses the reaction 1D-myo-inositol 1,4,5-trisphosphate + H2O = 1D-myo-inositol 1,4-bisphosphate + phosphate. The catalysed reaction is 1D-myo-inositol 1,3,4,5-tetrakisphosphate + H2O = 1D-myo-inositol 1,3,4-trisphosphate + phosphate. Its function is as follows. Has phosphatase activity toward Ins(1,4,5)P3 and Ins(1,3,4,5)P4. Seems to be involved in the abscisic acid (ABA) signaling pathway. Could also be able to hydrolyze PtdIns(4,5)P2 and PtdIns(3,4,5)P3. This is Type I inositol polyphosphate 5-phosphatase 2 from Arabidopsis thaliana (Mouse-ear cress).